The primary structure comprises 1379 residues: DNA-directed RNA polymerase subunit beta (1379 aa).

The protein belongs to the RNA polymerase beta chain family. As to quaternary structure, the RNAP catalytic core consists of 2 alpha, 1 beta, 1 beta' and 1 omega subunit. When a sigma factor is associated with the core the holoenzyme is formed, which can initiate transcription.

It carries out the reaction RNA(n) + a ribonucleoside 5'-triphosphate = RNA(n+1) + diphosphate. Its function is as follows. DNA-dependent RNA polymerase catalyzes the transcription of DNA into RNA using the four ribonucleoside triphosphates as substrates. The chain is DNA-directed RNA polymerase subunit beta from Rhizobium etli (strain ATCC 51251 / DSM 11541 / JCM 21823 / NBRC 15573 / CFN 42).